We begin with the raw amino-acid sequence, 192 residues long: ATP-dependent Clp protease proteolytic subunit 1 (192 aa).

The active-site Nucleophile is Ser92. Residue His117 is part of the active site.

This sequence belongs to the peptidase S14 family. Fourteen ClpP subunits assemble into 2 heptameric rings which stack back to back to give a disk-like structure with a central cavity, resembling the structure of eukaryotic proteasomes.

It is found in the cytoplasm. It carries out the reaction Hydrolysis of proteins to small peptides in the presence of ATP and magnesium. alpha-casein is the usual test substrate. In the absence of ATP, only oligopeptides shorter than five residues are hydrolyzed (such as succinyl-Leu-Tyr-|-NHMec, and Leu-Tyr-Leu-|-Tyr-Trp, in which cleavage of the -Tyr-|-Leu- and -Tyr-|-Trp bonds also occurs).. Cleaves peptides in various proteins in a process that requires ATP hydrolysis. Has a chymotrypsin-like activity. Plays a major role in the degradation of misfolded proteins. This chain is ATP-dependent Clp protease proteolytic subunit 1, found in Chlamydia muridarum (strain MoPn / Nigg).